Reading from the N-terminus, the 1183-residue chain is Phospholipid-transporting ATPase FetA (1183 aa).

3 helical membrane passes run 96 to 116 (ISSLAWYTTVIPLIVVLSITG), 299 to 319 (VLVVWIFMFLGGMCFLLSIGH), and 348 to 368 (ALIFWSYFIVLNTMVPISLYV). Aspartate 416 functions as the 4-aspartylphosphate intermediate in the catalytic mechanism. Residues aspartate 416, lysine 417, threonine 418, glutamate 519, phenylalanine 560, lysine 583, arginine 617, threonine 697, glycine 698, aspartate 699, arginine 812, and lysine 818 each coordinate ATP. Aspartate 416 provides a ligand contact to Mg(2+). Residue threonine 418 participates in Mg(2+) binding. Mg(2+) is bound at residue aspartate 838. ATP-binding residues include asparagine 841 and aspartate 842. Residue aspartate 842 coordinates Mg(2+). Transmembrane regions (helical) follow at residues 904 to 924 (FAFTLVHFWYAFFNGFSAQTV), 927 to 947 (IWFITFYNLIYTSLPVLGLSL), 981 to 1001 (CLLHGIYNSFVLFFVPMGTVF), 1014 to 1034 (FQSFSLLVQTTLIGVMTMQIA), 1049 to 1069 (WGSLGLYFCILILLCSDGLCL), and 1090 to 1110 (IWLCLILSTILCMIPLIGYNF).

It belongs to the cation transport ATPase (P-type) (TC 3.A.3) family. Type IV subfamily. Mg(2+) serves as cofactor. As to expression, highly expressed in testis.

The protein localises to the cytoplasmic vesicle. It is found in the secretory vesicle. Its subcellular location is the acrosome membrane. It carries out the reaction ATP + H2O + phospholipidSide 1 = ADP + phosphate + phospholipidSide 2.. Its function is as follows. P4-ATPase flippase which catalyzes the hydrolysis of ATP coupled to the transport of aminophospholipids from the outer to the inner leaflet of various membranes and ensures the maintenance of asymmetric distribution of phospholipids. Phospholipid translocation also seems to be implicated in vesicle formation and in uptake of lipid signaling molecules. May play a role in phospholid transport across membranes and in acrosome formation. The protein is Phospholipid-transporting ATPase FetA (Atp8b5) of Mus musculus (Mouse).